We begin with the raw amino-acid sequence, 1178 residues long: Phytochrome B (1178 aa).

Positions 1-15 (MASGSRATPTRSPSS) are enriched in polar residues. The disordered stretch occupies residues 1–58 (MASGSRATPTRSPSSARPEAPRHAHHHHHHHSQSSGGSTSRAGGGGGGGGGGGGTAAT). The segment covering 23–32 (HAHHHHHHHS) has biased composition (basic residues). A compositionally biased stretch (gly residues) spans 42-55 (AGGGGGGGGGGGGT). Positions 267-449 (DIKLLCDTVV…AFGLQLNMEL (183 aa)) constitute a GAF domain. C372 is a binding site for phytochromobilin. PAS domains lie at 668 to 739 (VARE…LRGE) and 802 to 873 (DYKA…MVVI). Residues 950 to 1170 (YICQEIKNPL…LIVLELPQPR (221 aa)) form the Histidine kinase domain.

Belongs to the phytochrome family. In terms of assembly, homodimer. Post-translationally, contains one covalently linked phytochromobilin chromophore.

Its function is as follows. Regulatory photoreceptor which exists in two forms that are reversibly interconvertible by light: the Pr form that absorbs maximally in the red region of the spectrum and the Pfr form that absorbs maximally in the far-red region. Photoconversion of Pr to Pfr induces an array of morphogenic responses, whereas reconversion of Pfr to Pr cancels the induction of those responses. Pfr controls the expression of a number of nuclear genes including those encoding the small subunit of ribulose-bisphosphate carboxylase, chlorophyll A/B binding protein, protochlorophyllide reductase, rRNA, etc. It also controls the expression of its own gene(s) in a negative feedback fashion. This is Phytochrome B (PHYB) from Sorghum bicolor (Sorghum).